A 229-amino-acid polypeptide reads, in one-letter code: NAD(P)H-quinone oxidoreductase subunit K, chloroplastic (229 aa).

Cys-43, Cys-44, Cys-108, and Cys-139 together coordinate [4Fe-4S] cluster.

Belongs to the complex I 20 kDa subunit family. As to quaternary structure, NDH is composed of at least 16 different subunits, 5 of which are encoded in the nucleus. [4Fe-4S] cluster serves as cofactor.

The protein resides in the plastid. Its subcellular location is the chloroplast thylakoid membrane. It catalyses the reaction a plastoquinone + NADH + (n+1) H(+)(in) = a plastoquinol + NAD(+) + n H(+)(out). The catalysed reaction is a plastoquinone + NADPH + (n+1) H(+)(in) = a plastoquinol + NADP(+) + n H(+)(out). In terms of biological role, NDH shuttles electrons from NAD(P)H:plastoquinone, via FMN and iron-sulfur (Fe-S) centers, to quinones in the photosynthetic chain and possibly in a chloroplast respiratory chain. The immediate electron acceptor for the enzyme in this species is believed to be plastoquinone. Couples the redox reaction to proton translocation, and thus conserves the redox energy in a proton gradient. This is NAD(P)H-quinone oxidoreductase subunit K, chloroplastic from Coffea arabica (Arabian coffee).